The following is a 267-amino-acid chain: DNA damage-regulated autophagy modulator protein 2 (267 aa).

The next 6 helical transmembrane spans lie at 8–28, 53–73, 87–107, 118–138, 160–180, and 203–223; these read LSFL…FSYI, RCLF…TIYV, LIIK…LGLS, FIVH…YMFV, LLLV…SSIL, and VLHI…FGFF.

The protein belongs to the DRAM/TMEM150 family.

It is found in the lysosome membrane. Its subcellular location is the photoreceptor inner segment. The protein localises to the apical cell membrane. In terms of biological role, plays a role in the initiation of autophagy. In the retina, might be involved in the process of photoreceptor cells renewal and recycling to preserve visual function. Induces apoptotic cell death when coexpressed with DRAM1. This Rattus norvegicus (Rat) protein is DNA damage-regulated autophagy modulator protein 2 (Dram2).